The following is a 706-amino-acid chain: Protein argonaute (706 aa).

The tract at residues 1–108 (MGKEALLNLY…ELFRDFLTKT (108 aa)) is N-terminal domain. The linker L1 stretch occupies residues 109–165 (KVKDKFISDFYKKFRDKITVQGKNRKIALIPEVNEKVLKSEEGYFLLHLDLKFRIQP). The PAZ domain maps to 168–259 (TLQTLLERND…YPATILKPVL (92 aa)). The interval 263–334 (NLEDEERNEV…AKGKNTKVIT (72 aa)) is linker L2. Residues 335-448 (NLRKFLELCR…YDFVKRELLK (114 aa)) are mid domain. A Piwi domain is found at 419 to 694 (LVIVFLEEYP…ITKLMLRGIE (276 aa)). A PIWI domain region spans residues 449–706 (KMIPSQVILN…KKEGDIMYWL (258 aa)). Active-site residues include Asp-502, Glu-541, and Asp-571. A Mn(2+)-binding site is contributed by Asp-502. Asp-571 lines the Mn(2+) pocket. Residues 612–650 (FIKGYFYKLSEDSVILATYNQVYEGTHQPIKVRKVYGEL) are PIWI box. The active site involves Asp-683. Asp-683 serves as a coordination point for Mn(2+).

Belongs to the argonaute family. Long pAgo subfamily. Requires Mg(2+) as cofactor.

A DNA-guided RNA endonuclease. Uses short ssDNA sequences as guides (gDNA) to bind complementary target strands, resulting in cleavage of the target RNA. The cleavage site is 10 nucleotides downstream of the residue base paired with the 5'-end of the gDNA. Binds ssDNA better than ssRNA, binds dsDNA and DNA-RNA hybrids but does not bind dsRNA. A 2 nucleotide 3'-overhang (possibly on the guide strand) may help load nucleic acids into the complex. This is Protein argonaute from Aquifex aeolicus (strain VF5).